The sequence spans 192 residues: Xanthine phosphoribosyltransferase 2 (192 aa).

L20 and N27 together coordinate xanthine. 131-135 provides a ligand contact to 5-phospho-alpha-D-ribose 1-diphosphate; sequence ANACA. K159 is a xanthine binding site.

The protein belongs to the purine/pyrimidine phosphoribosyltransferase family. Xpt subfamily. As to quaternary structure, homodimer.

The protein localises to the cytoplasm. The enzyme catalyses XMP + diphosphate = xanthine + 5-phospho-alpha-D-ribose 1-diphosphate. It functions in the pathway purine metabolism; XMP biosynthesis via salvage pathway; XMP from xanthine: step 1/1. Its function is as follows. Converts the preformed base xanthine, a product of nucleic acid breakdown, to xanthosine 5'-monophosphate (XMP), so it can be reused for RNA or DNA synthesis. This Clostridium perfringens (strain ATCC 13124 / DSM 756 / JCM 1290 / NCIMB 6125 / NCTC 8237 / Type A) protein is Xanthine phosphoribosyltransferase 2.